A 119-amino-acid polypeptide reads, in one-letter code: Autophagy-related protein 8A (119 aa).

G117 carries Phosphatidylethanolamine amidated glycine lipidation. Residues 118–119 (SA) constitute a propeptide, removed in mature form.

Belongs to the ATG8 family. Interacts with ATG4. The C-terminal 2 residues are removed by ATG4 to expose Gly-117 at the C-terminus. The C-terminal Gly is then amidated with phosphatidylethanolamine by an activating system similar to that for ubiquitin. In terms of tissue distribution, constitutively expressed.

The protein localises to the cytoplasmic vesicle. The protein resides in the autophagosome membrane. It localises to the vacuole membrane. It is found in the cytoplasm. Its subcellular location is the cytoskeleton. Its function is as follows. Ubiquitin-like modifier involved in cytoplasm to vacuole transport (Cvt) vesicles and autophagosomes formation. May mediate the delivery of the vesicles and autophagosomes to the vacuole via the microtubule cytoskeleton. Functionally, ubiquitin-like modifier involved in autophagosomes formation. May mediate the delivery of the autophagosomes to the vacuole via the microtubule cytoskeleton. The chain is Autophagy-related protein 8A (ATG8A) from Oryza sativa subsp. indica (Rice).